We begin with the raw amino-acid sequence, 576 residues long: MKYVVVSGGVISGIGKGVLASSTGMLLKTLGLKVTSIKIDPYMNLDAGTMSPLEHGECFVLNDGGETDLDLGNYERYLGVTLTKDHNITTGKVYSHVMAKERKGDYLGKTVQVVPHLTNAIQDWLERVARIPVDDSGMEPDVCIIELGGTVGDIESAPFVEALRQFQFRVGRDNFALIHVSLVPVIHGEQKTKPTQAAIKDLRSLGLTPDMIACRCSEELDKPTIEKIAMFCHVGPEQVVNVHDVASTYHVPLLLLEQRMIDYLGQRLKLSDIKLGAEDKERGARLLDRWRHLTTAIDESFEVVQIALVGKYTHLKDSYLSVIKALEHSSMRCKRKLEIVWVEASDLEPEMSASDKEKFQQAWKSLSSSDGILVPGGFGTRGTEGMILAAKWARENKIPYLGVCLGLQVATIEFARHVLGIADATSSEFYPEVAEDKQVVVYMPEIDKQNMGGTMRLGLRPTIFQEDTDWSIIRKLYGSASSVEERHRHRYEINPKMVQKLEEHGLKFVGRDETGTRCEILELVDHPYYVATQYHPEYMSKVLDPSQPFLGLVAAAANILPSLLAAERAVGARADF.

The region spanning 305 to 559 is the Glutamine amidotransferase type-1 domain; the sequence is QIALVGKYTH…LGLVAAAANI (255 aa). Catalysis depends on for GATase activity residues cysteine 404, histidine 535, and glutamate 537.

This sequence belongs to the CTP synthase family.

It catalyses the reaction UTP + L-glutamine + ATP + H2O = CTP + L-glutamate + ADP + phosphate + 2 H(+). It functions in the pathway pyrimidine metabolism; CTP biosynthesis via de novo pathway; CTP from UDP: step 2/2. In terms of biological role, catalyzes the ATP-dependent amination of UTP to CTP with either L-glutamine or ammonia as the source of nitrogen. The polypeptide is CTP synthase (URA7) (Eremothecium gossypii (strain ATCC 10895 / CBS 109.51 / FGSC 9923 / NRRL Y-1056) (Yeast)).